Reading from the N-terminus, the 175-residue chain is MELTVGRVVKAHGISGEIVVEIRTDDPAARFAPGNTLRAKPSRGGPERSCVIESAREHGGRLLVRLAGVTDRDAADALRGTLFVVDSAELPDIDEPDTYYDHQLEGLQVRTTGGQRVGAVAEVLHTAAGELLAVRDDADGAPREVLVPFVSAIVTAVSLDDGLIEIDPPDGLLDL.

Residues 96–172 (PDTYYDHQLE…LIEIDPPDGL (77 aa)) form the PRC barrel domain.

The protein belongs to the RimM family. As to quaternary structure, binds ribosomal protein uS19.

The protein resides in the cytoplasm. Functionally, an accessory protein needed during the final step in the assembly of 30S ribosomal subunit, possibly for assembly of the head region. Essential for efficient processing of 16S rRNA. May be needed both before and after RbfA during the maturation of 16S rRNA. It has affinity for free ribosomal 30S subunits but not for 70S ribosomes. This chain is Ribosome maturation factor RimM, found in Mycobacterium avium (strain 104).